Here is a 234-residue protein sequence, read N- to C-terminus: Leucyl/phenylalanyl-tRNA--protein transferase (234 aa).

It belongs to the L/F-transferase family.

It localises to the cytoplasm. The enzyme catalyses N-terminal L-lysyl-[protein] + L-leucyl-tRNA(Leu) = N-terminal L-leucyl-L-lysyl-[protein] + tRNA(Leu) + H(+). It carries out the reaction N-terminal L-arginyl-[protein] + L-leucyl-tRNA(Leu) = N-terminal L-leucyl-L-arginyl-[protein] + tRNA(Leu) + H(+). It catalyses the reaction L-phenylalanyl-tRNA(Phe) + an N-terminal L-alpha-aminoacyl-[protein] = an N-terminal L-phenylalanyl-L-alpha-aminoacyl-[protein] + tRNA(Phe). Functionally, functions in the N-end rule pathway of protein degradation where it conjugates Leu, Phe and, less efficiently, Met from aminoacyl-tRNAs to the N-termini of proteins containing an N-terminal arginine or lysine. The chain is Leucyl/phenylalanyl-tRNA--protein transferase from Nitrosomonas eutropha (strain DSM 101675 / C91 / Nm57).